Reading from the N-terminus, the 122-residue chain is Large ribosomal subunit protein uL14 (122 aa).

It belongs to the universal ribosomal protein uL14 family. In terms of assembly, part of the 50S ribosomal subunit. Forms a cluster with proteins L3 and L19. In the 70S ribosome, L14 and L19 interact and together make contacts with the 16S rRNA in bridges B5 and B8.

Binds to 23S rRNA. Forms part of two intersubunit bridges in the 70S ribosome. In Limosilactobacillus fermentum (strain NBRC 3956 / LMG 18251) (Lactobacillus fermentum), this protein is Large ribosomal subunit protein uL14.